Reading from the N-terminus, the 175-residue chain is Peptide deformylase (175 aa).

Fe cation-binding residues include Cys-98 and His-140. The active site involves Glu-141. His-144 serves as a coordination point for Fe cation.

It belongs to the polypeptide deformylase family. It depends on Fe(2+) as a cofactor.

The catalysed reaction is N-terminal N-formyl-L-methionyl-[peptide] + H2O = N-terminal L-methionyl-[peptide] + formate. Removes the formyl group from the N-terminal Met of newly synthesized proteins. Requires at least a dipeptide for an efficient rate of reaction. N-terminal L-methionine is a prerequisite for activity but the enzyme has broad specificity at other positions. This chain is Peptide deformylase, found in Nitrobacter hamburgensis (strain DSM 10229 / NCIMB 13809 / X14).